We begin with the raw amino-acid sequence, 1248 residues long: Reverse gyrase 1 (1248 aa).

The segment at 7-44 (IPPSIYLFSCPNCGRSISTYRLLLGSVCNICLEEDKEY) adopts an RG N-terminal-type zinc-finger fold. Zn(2+) is bound by residues Cys16, Cys19, Cys34, and Cys37. ATP-binding positions include Gln92 and 109 to 116 (APPGLGKT). The Helicase ATP-binding domain occupies 96–262 (IYRLLSGESF…KKYRENTQKN (167 aa)). Positions 219 to 222 (DDVD) match the DEAD box motif. The topoisomerase I stretch occupies residues 621–1248 (QKVKTVLLVV…QVYEEINEIR (628 aa)). One can recognise a Toprim domain in the interval 625–789 (TVLLVVESPN…NIRRAEFHEV (165 aa)). Glu631 lines the Mg(2+) pocket. An RG C-terminal-type; atypical zinc finger spans residues 706-735 (IKKCENNHQFTDFFESNKCPRCMTTKVRYD). Cys709, His713, Cys724, and Cys727 together coordinate Zn(2+). A Mg(2+)-binding site is contributed by Asp758. One can recognise a Topo IA-type catalytic domain in the interval 805-1248 (NVNLVKSQLV…QVYEEINEIR (444 aa)). The active-site O-(5'-phospho-DNA)-tyrosine intermediate is the Tyr965.

This sequence in the N-terminal section; belongs to the DEAD box helicase family. DDVD subfamily. The protein in the C-terminal section; belongs to the type IA topoisomerase family. In terms of assembly, monomer. Requires Zn(2+) as cofactor. It depends on Mg(2+) as a cofactor. The N-terminus is blocked.

Its subcellular location is the cytoplasm. It carries out the reaction ATP + H2O = ADP + phosphate + H(+). Functionally, modifies the topological state of DNA by introducing positive supercoils in an ATP-dependent process. Increases the linking number in steps of +1. Has a DNA-stimulated ATPase activity; closed circular ssDNA stimulates ATPase much better than dsDNA although negative supercoiled, positive supercoiled and relaxed dsDNA all stimulate ATPase activity. All NTPs permit topoisomerization (relaxation) of negatively supercoiled dsDNA without nucleotide hydrolysis. It transiently cleaves a single DNA strand and remains covalently bound to the 5' DNA end. Acts via a tyrosine residue. Reverse gyrase binds and unwinds DNA independently of ATP binding and DNA cleavage. May be involved in rewinding the DNA strands in the regions of the chromosome that have opened up to allow transcription or replication, probably acts via ssDNA regions of the chromosome. The polypeptide is Reverse gyrase 1 (Sulfolobus acidocaldarius (strain ATCC 33909 / DSM 639 / JCM 8929 / NBRC 15157 / NCIMB 11770)).